The chain runs to 373 residues: Queuine tRNA-ribosyltransferase (373 aa).

Aspartate 94 (proton acceptor) is an active-site residue. Residues 94 to 98 (DSGGF), aspartate 148, glutamine 190, and glycine 217 each bind substrate. Residues 248-254 (GVGSPDC) form an RNA binding region. The Nucleophile role is filled by aspartate 267. Residues 272 to 276 (TRIAR) form an RNA binding; important for wobble base 34 recognition region. Zn(2+) is bound by residues cysteine 305, cysteine 307, cysteine 310, and histidine 336.

Belongs to the queuine tRNA-ribosyltransferase family. As to quaternary structure, homodimer. Within each dimer, one monomer is responsible for RNA recognition and catalysis, while the other monomer binds to the replacement base PreQ1. Zn(2+) is required as a cofactor.

The catalysed reaction is 7-aminomethyl-7-carbaguanine + guanosine(34) in tRNA = 7-aminomethyl-7-carbaguanosine(34) in tRNA + guanine. It functions in the pathway tRNA modification; tRNA-queuosine biosynthesis. Its function is as follows. Catalyzes the base-exchange of a guanine (G) residue with the queuine precursor 7-aminomethyl-7-deazaguanine (PreQ1) at position 34 (anticodon wobble position) in tRNAs with GU(N) anticodons (tRNA-Asp, -Asn, -His and -Tyr). Catalysis occurs through a double-displacement mechanism. The nucleophile active site attacks the C1' of nucleotide 34 to detach the guanine base from the RNA, forming a covalent enzyme-RNA intermediate. The proton acceptor active site deprotonates the incoming PreQ1, allowing a nucleophilic attack on the C1' of the ribose to form the product. After dissociation, two additional enzymatic reactions on the tRNA convert PreQ1 to queuine (Q), resulting in the hypermodified nucleoside queuosine (7-(((4,5-cis-dihydroxy-2-cyclopenten-1-yl)amino)methyl)-7-deazaguanosine). This chain is Queuine tRNA-ribosyltransferase, found in Moorella thermoacetica (strain ATCC 39073 / JCM 9320).